Consider the following 549-residue polypeptide: SET and MYND domain-containing protein DDB_G0277331 (549 aa).

Residues 27-283 (KGIELRYCDG…KDEELFINYS (257 aa)) form the SET domain. The Zn(2+) site is built by Cys-71, Cys-74, Cys-90, Cys-93, Cys-99, Cys-103, His-111, and Cys-115. The segment at 71 to 115 (CDECLKNKLDLEEGKTLKRCSNCKLVYYCSTDCQTKAWKIHKQEC) adopts an MYND-type zinc-finger fold. A coiled-coil region spans residues 340–401 (NINNNNNNNN…IIKNLQNKLS (62 aa)).

It belongs to the class V-like SAM-binding methyltransferase superfamily.

In terms of biological role, probable methyltransferase. This is SET and MYND domain-containing protein DDB_G0277331 from Dictyostelium discoideum (Social amoeba).